Reading from the N-terminus, the 485-residue chain is MNEAVTIRGKERYKSGVMEYKKMGYWEPDYEPKDTDVIALFRVTPQDGVDPIEAAAAVAGESSTATWTVVWTDRLTAAEKYRAKCYRVDPVPNSLGQYFAYIAYDLDLFEPGSISNLTASIIGNVFGFKPLKALRLEDMRLPIAYVKTFQGPATGIVVERERMDKFGRPLLGATVKPKLGLSGRNYGRVVYEALKGGLDFTKDDENINSQPFMHWRERFQYCMEAVNKAQAQTGEIKGTYLNVTAATMEDMYERAEYAKELGSIIVMIDLVIGYTAIQSMAKWARKNDMILHLHRAGHSTYTRQRNHGVSFRVIAKWMRLAGVDHIHAGTVVGKLEGDPATTKGYYDICREDFNPMTLENGLFFDQHWASLNKLMPVASGGIHAGQMHQLLHLLGEDVVLQFGGGTIGHPMGIAAGATANRVALEAMILARNEGRDYLHEGPEILAKAAQTCTPLKAALDTWKNVTFNYESTDTPDYAPTPSVSV.

Substrate is bound by residues Asn-124 and Thr-174. The Proton acceptor role is filled by Lys-176. Substrate is bound at residue Lys-178. Mg(2+) is bound by residues Lys-202, Asp-204, and Glu-205. Lys-202 carries the post-translational modification N6-carboxylysine. The active-site Proton acceptor is the His-294. Positions 295, 327, and 379 each coordinate substrate.

Belongs to the RuBisCO large chain family. Type I subfamily. Heterohexadecamer of 8 large chains and 8 small chains. Mg(2+) is required as a cofactor.

The catalysed reaction is 2 (2R)-3-phosphoglycerate + 2 H(+) = D-ribulose 1,5-bisphosphate + CO2 + H2O. It catalyses the reaction D-ribulose 1,5-bisphosphate + O2 = 2-phosphoglycolate + (2R)-3-phosphoglycerate + 2 H(+). In terms of biological role, ruBisCO catalyzes two reactions: the carboxylation of D-ribulose 1,5-bisphosphate, the primary event in carbon dioxide fixation, as well as the oxidative fragmentation of the pentose substrate. Both reactions occur simultaneously and in competition at the same active site. The polypeptide is Ribulose bisphosphate carboxylase large chain (Rhodopseudomonas palustris (strain ATCC BAA-98 / CGA009)).